Here is a 217-residue protein sequence, read N- to C-terminus: Kunitz-type trypsin inhibitor-like 2 protein (217 aa).

An N-terminal signal peptide occupies residues 1 to 26 (MKPLSPLTLSFLLFVFITTLSLAFSN). 2 disulfide bridges follow: Cys70/Cys115 and Cys168/Cys175. Residue Asn191 is glycosylated (N-linked (GlcNAc...) asparagine).

It belongs to the protease inhibitor I3 (leguminous Kunitz-type inhibitor) family.

Its subcellular location is the secreted. Might act as a protease inhibitor involved in plant defense responses. This is Kunitz-type trypsin inhibitor-like 2 protein (PIP20-2) from Pisum sativum (Garden pea).